Here is a 114-residue protein sequence, read N- to C-terminus: Large ribosomal subunit protein uL22 (114 aa).

Belongs to the universal ribosomal protein uL22 family. As to quaternary structure, part of the 50S ribosomal subunit.

In terms of biological role, this protein binds specifically to 23S rRNA; its binding is stimulated by other ribosomal proteins, e.g. L4, L17, and L20. It is important during the early stages of 50S assembly. It makes multiple contacts with different domains of the 23S rRNA in the assembled 50S subunit and ribosome. The globular domain of the protein is located near the polypeptide exit tunnel on the outside of the subunit, while an extended beta-hairpin is found that lines the wall of the exit tunnel in the center of the 70S ribosome. The protein is Large ribosomal subunit protein uL22 of Desulfitobacterium hafniense (strain Y51).